Here is a 282-residue protein sequence, read N- to C-terminus: MASKRWCFTLNYKTAVERESFISLFSRDELNYFVCGDETAPTTNQKHLQGYVSLKKMIRLGGLKKKFGYRAHWEIAKGDDFQNRDYCTKETLISEIGAPVKKGSNQRKIMDLYLQDPEEMQLKDPDTALRCNAKRLRIEYCSSFAVISLRPWQSELHRVLMAEPDDRTIIWVYGSDGGEGKSTFAKELIKYGWFYTAGGKTQDILYMYAQDPERNIAFDVPRCSSEMMNYQAMEMLKNRVFASTKYRPVDLCVRKKVHLIVFANVSPDPTKISEDRIVIINC.

The CRESS-DNA virus Rep endonuclease domain maps to 1-99; sequence MASKRWCFTL…ETLISEIGAP (99 aa). Residues 7-10 carry the RCR-1 motif; sequence CFTL. Residues Glu-38 and His-47 each coordinate a divalent metal cation. The RCR-2 signature appears at 47–49; the sequence is HLQ. Residues 56–77 carry the Nuclear localization signal motif; that stretch reads KMIRLGGLKKKFGYRAHWEIAK. Tyr-86 (for DNA cleavage activity) is an active-site residue. Positions 86 to 89 match the RCR-3 motif; it reads YCTK. A divalent metal cation is bound at residue Ser-94. 174-182 is an ATP binding site; the sequence is GSDGGEGKS.

This sequence belongs to the nanoviridea/circoviridae replication-associated protein family. In terms of assembly, homooligomer (Potential). Rep binds to repeated DNA motifs (iterons). Mg(2+) serves as cofactor. It depends on Mn(2+) as a cofactor.

The protein localises to the host nucleus. The enzyme catalyses ATP + H2O = ADP + phosphate + H(+). In terms of biological role, initiates and terminates the replication only of its own subviral DNA molecule. The closed circular ssDNA genome is first converted to a superhelical dsDNA. Rep binds a specific hairpin at the genome origin of replication. Introduces an endonucleolytic nick within the intergenic region of the genome, thereby initiating the rolling circle replication (RCR). Following cleavage, binds covalently to the 5'-phosphate of DNA as a tyrosyl ester. The cleavage gives rise to a free 3'-OH that serves as a primer for the cellular DNA polymerase. The polymerase synthesizes the (+) strand DNA by rolling circle mechanism. After one round of replication, a Rep-catalyzed nucleotidyl transfer reaction releases a circular single-stranded virus genome, thereby terminating the replication. Displays origin-specific DNA cleavage, nucleotidyl transferase, ATPase and helicase activities. The polypeptide is Para-Rep C1 (C1) (Faba bean necrotic yellows C11 alphasatellite (FBNYC11A)).